The chain runs to 339 residues: Agamous-like MADS-box protein AGL86 (339 aa).

The 60-residue stretch at 1-60 (MRSKIKLSLIANKTSRRTTFRKRKGGITNKLHELTTLCGVKACAVISSPYENPVVWPSTE) folds into the MADS-box domain. Residues 86 to 112 (TYLQDKITKETKKLESLRRENRESQLR) are a coiled coil.

In terms of assembly, interacts with AGL61/DIANA and AGL62.

The protein resides in the nucleus. Its function is as follows. Probable transcription factor. The chain is Agamous-like MADS-box protein AGL86 (AGL86) from Arabidopsis thaliana (Mouse-ear cress).